Reading from the N-terminus, the 196-residue chain is HTH-type transcriptional regulator BetI (196 aa).

Residues E8–L68 form the HTH tetR-type domain. The H-T-H motif DNA-binding region spans T31–F50.

The protein operates within amine and polyamine biosynthesis; betaine biosynthesis via choline pathway [regulation]. Functionally, repressor involved in the biosynthesis of the osmoprotectant glycine betaine. It represses transcription of the choline transporter BetT and the genes of BetAB involved in the synthesis of glycine betaine. This Paraburkholderia phymatum (strain DSM 17167 / CIP 108236 / LMG 21445 / STM815) (Burkholderia phymatum) protein is HTH-type transcriptional regulator BetI.